Here is a 380-residue protein sequence, read N- to C-terminus: Erythronate-4-phosphate dehydrogenase (380 aa).

Substrate contacts are provided by S45 and T66. Residues 126–127 (QV), D146, T174, 205–207 (ASR), and D231 contribute to the NAD(+) site. R207 is a catalytic residue. E236 is a catalytic residue. The active-site Proton donor is the H253. Position 256 (G256) interacts with NAD(+). Y257 is a substrate binding site.

The protein belongs to the D-isomer specific 2-hydroxyacid dehydrogenase family. PdxB subfamily. Homodimer.

It localises to the cytoplasm. It carries out the reaction 4-phospho-D-erythronate + NAD(+) = (R)-3-hydroxy-2-oxo-4-phosphooxybutanoate + NADH + H(+). The protein operates within cofactor biosynthesis; pyridoxine 5'-phosphate biosynthesis; pyridoxine 5'-phosphate from D-erythrose 4-phosphate: step 2/5. In terms of biological role, catalyzes the oxidation of erythronate-4-phosphate to 3-hydroxy-2-oxo-4-phosphonooxybutanoate. This chain is Erythronate-4-phosphate dehydrogenase, found in Pseudomonas savastanoi pv. phaseolicola (strain 1448A / Race 6) (Pseudomonas syringae pv. phaseolicola (strain 1448A / Race 6)).